The primary structure comprises 433 residues: tRNA-2-methylthio-N(6)-dimethylallyladenosine synthase (433 aa).

Residues Lys4–Phe119 enclose the MTTase N-terminal domain. [4Fe-4S] cluster-binding residues include Cys13, Cys50, Cys82, Cys151, Cys155, and Cys158. A Radical SAM core domain is found at Arg137 to Lys370. Positions Lys373–Val433 constitute a TRAM domain.

It belongs to the methylthiotransferase family. MiaB subfamily. As to quaternary structure, monomer. The cofactor is [4Fe-4S] cluster.

The protein resides in the cytoplasm. The enzyme catalyses N(6)-dimethylallyladenosine(37) in tRNA + (sulfur carrier)-SH + AH2 + 2 S-adenosyl-L-methionine = 2-methylsulfanyl-N(6)-dimethylallyladenosine(37) in tRNA + (sulfur carrier)-H + 5'-deoxyadenosine + L-methionine + A + S-adenosyl-L-homocysteine + 2 H(+). Functionally, catalyzes the methylthiolation of N6-(dimethylallyl)adenosine (i(6)A), leading to the formation of 2-methylthio-N6-(dimethylallyl)adenosine (ms(2)i(6)A) at position 37 in tRNAs that read codons beginning with uridine. In Campylobacter jejuni subsp. jejuni serotype O:2 (strain ATCC 700819 / NCTC 11168), this protein is tRNA-2-methylthio-N(6)-dimethylallyladenosine synthase.